The chain runs to 469 residues: Phenolic glucoside malonyltransferase 1 (469 aa).

Met-1 carries the N-acetylmethionine modification. The Proton acceptor role is filled by His-169. Residues 169–173 (HAVLD) carry the HXXXD motif motif. Malonyl-CoA is bound at residue 291–292 (ST). Asp-413 acts as the Proton acceptor in catalysis. The short motif at 413–417 (DFGWG) is the DFGWG motif element.

It belongs to the plant acyltransferase family. Phenolic glucoside malonyltransferase subfamily.

The catalysed reaction is a flavonol 3-O-beta-D-glucoside + malonyl-CoA = a flavonol 3-O-(6-O-malonyl-beta-D-glucoside) + CoA. It carries out the reaction a flavonol 7-O-beta-D-glucoside + malonyl-CoA = a flavonol 7-O-(6-O-malonyl-beta-D-glucoside) + CoA. In terms of biological role, malonyltransferase acting on xenobiotic glucosides. Has activity toward 2-Naphthol glucoside (2NAG), 1-Naphthol glucoside (1NAG), kaempferol 7-O-glucoside, kaempferol 3-O-glucoside, hydroxycoumarin glucosides, phenol-glucosides and isoflavone glucoside (daidzin), but not toward 4-coumaroyl glucoside, kaempferol 3,7-O-diglucoside, salicylic acid glucoside and phlorizin. In vivo, seems to be involved in the malonylation of 2-Naphthol glucoside while PMAT2 would be involved in the malonylation of 4-methylumbelliferone glucoside or 4-nitrophenyl glucoside. The polypeptide is Phenolic glucoside malonyltransferase 1 (PMAT1) (Arabidopsis thaliana (Mouse-ear cress)).